The following is a 149-amino-acid chain: Transcription factor MafF (149 aa).

The tract at residues 51–76 (RLKQRRRTLKNRGYAASCRVKRVCQK) is basic motif. The region spanning 51-114 (RLKQRRRTLK…DTLRGKYEAL (64 aa)) is the bZIP domain. Residues 79 to 93 (LQKQKMELEWEVDKL) form a leucine-zipper region.

Belongs to the bZIP family. Maf subfamily. Monomer and homo- or heterodimer. In terms of tissue distribution, highly expressed in the ovary, lower expression in the brain, heart and mesenterium.

It is found in the nucleus. Since it lacks a putative transactivation domain, it may behave as a transcriptional repressor when it dimerizes among itself. May also serve as a transcriptional activator by dimerizing with other (usually larger) basic-zipper proteins and recruiting them to specific DNA-binding sites. May be involved in the cellular stress response. This Gallus gallus (Chicken) protein is Transcription factor MafF (MAFF).